The chain runs to 652 residues: Thioredoxin reductase 3 (652 aa).

The segment covering 1 to 12 (MEKPPSPPPPPR) has biased composition (pro residues). Residues 1-62 (MEKPPSPPPP…TSRPSSEARE (62 aa)) form a disordered region. Residue Arg34 is modified to Asymmetric dimethylarginine; alternate. Residue Arg34 is modified to Omega-N-methylarginine; alternate. Ser50 is modified (phosphoserine). Residues 65-165 (RRRLRDLIEG…KLLQDDSAHD (101 aa)) form the Glutaredoxin domain. Position 167–196 (167–196 (DLIIIGGGSGGLSCAKEAANLGKKVMVLDF)) interacts with FAD. An intrachain disulfide couples Cys212 to Cys217. Lys388 carries the N6-succinyllysine modification. Residue His625 is the Proton acceptor of the active site. The segment at residues 650–651 (CU) is a cross-link (cysteinyl-selenocysteine (Cys-Sec)). Position 651 (Sec651) is a non-standard amino acid, selenocysteine.

It belongs to the class-I pyridine nucleotide-disulfide oxidoreductase family. Homodimer. Requires FAD as cofactor. In terms of tissue distribution, expressed preferentially in testis where it is found in spermatids and spermatocytes but not in sperm. In elongating spermatids, expressed at the site of mitochondrial sheath formation. Low levels in other tissues including heart, lung, liver, kidney, brain, muscle and prostate.

Its subcellular location is the cytoplasm. The protein resides in the nucleus. The protein localises to the microsome. It is found in the endoplasmic reticulum. It carries out the reaction [thioredoxin]-dithiol + NADP(+) = [thioredoxin]-disulfide + NADPH + H(+). Displays thioredoxin reductase, glutaredoxin and glutathione reductase activities. Catalyzes disulfide bond isomerization. Promotes disulfide bond formation between GPX4 and various sperm proteins and may play a role in sperm maturation by promoting formation of sperm structural components. The polypeptide is Thioredoxin reductase 3 (Mus musculus (Mouse)).